A 155-amino-acid chain; its full sequence is uncharacterized protein (155 aa).

The HTH asnC-type domain occupies 4-65 (IDEIDEVIVR…VVDPSFFGEF (62 aa)). Residues 23 to 42 (LTELGRKVGLTASAVKNRIE) constitute a DNA-binding region (H-T-H motif).

This is an uncharacterized protein from Pyrococcus horikoshii (strain ATCC 700860 / DSM 12428 / JCM 9974 / NBRC 100139 / OT-3).